A 685-amino-acid chain; its full sequence is Sorbicillinoid biosynthetic cluster transcription factor sor4 (685 aa).

The span at 1 to 14 (MGSSATATTTGEST) shows a compositional bias: low complexity. Residues 1–20 (MGSSATATTTGESTRQQPGL) are disordered. Residues 22 to 49 (CEECRRRKARCDRVRPKCGICADSGRNC) constitute a DNA-binding region (zn(2)-C6 fungal-type). Residues 81–112 (GQNDAPSLPQERDSLGCPTPSEKVSPEGDLVS) are disordered.

Its subcellular location is the nucleus. Its function is as follows. Transcription factor that acts as the main regulator of the gene cluster that mediates the biosynthesis of sorbicillinoids, a diverse group of yellow secondary metabolites that restrict growth of competing pathogenic fungi but not of bacteria. The protein is Sorbicillinoid biosynthetic cluster transcription factor sor4 of Hypocrea jecorina (strain QM6a) (Trichoderma reesei).